A 484-amino-acid polypeptide reads, in one-letter code: MAKITTSMIQEILTAIGGKSNVIKCGNCMTRLRLTLHDDNLADRDTIKRIAGVMGLVESDDQFQIVLGPGKAQTAAEMMNEMMEGEEDNSASTTAESRDLKDVASEHKQKLKKKQTSAAQRFLSKFATIFTPLIPGFIAAGLLLGFATLLDQIYIIGNESPNANLVDLILYMKVFSKGLFSFLSILIGYNAQQAFGGSGVNGAILASLFVLGYNPDATSGIYSGMTDFFGHGIDPRGNIIGVLIAAIIGAGVEKKVRQYMPDNLDMILTSVVTLLIMGAVTFVVIMPIGGVLFQGMSWLFMNLNGNPIGSAILAGLFLISVMFGIHQGFVPVYFALMDAQGFNSLFPILAMAGAGQVGAALALYAKANKDALLRTQVKGSIIPGFLGIGEPLIYGVTLPRVKPFITACVGGAAGGFFIGLVSYMGLPVGLNTVFGPSGIVALPLMTSNAGIFAGMLVFAAGLVISYVAGFLATWFFGTKNVDLS.

The PTS EIIB type-1 domain occupies 1–89 (MAKITTSMIQ…NEMMEGEEDN (89 aa)). Cys28 serves as the catalytic Phosphocysteine intermediate; for EIIB activity. Residues 83–106 (MEGEEDNSASTTAESRDLKDVASE) form a disordered region. Positions 96–106 (ESRDLKDVASE) are enriched in basic and acidic residues. One can recognise a PTS EIIC type-1 domain in the interval 124 to 484 (SKFATIFTPL…FFGTKNVDLS (361 aa)). 10 helical membrane passes run 126–146 (FATI…LLGF), 168–188 (LILY…ILIG), 194–214 (AFGG…LGYN), 232–252 (GIDP…GAGV), 273–293 (TLLI…GVLF), 312–332 (ILAG…FVPV), 345–365 (LFPI…ALYA), 379–399 (GSII…VTLP), 404–424 (FITA…VSYM), and 451–471 (IFAG…AGFL).

Its subcellular location is the cell inner membrane. The enzyme catalyses N-acetyl-beta-D-muramate(out) + N(pros)-phospho-L-histidyl-[protein] = N-acetyl-beta-D-muramate 6-phosphate(in) + L-histidyl-[protein]. Functionally, the phosphoenolpyruvate-dependent sugar phosphotransferase system (sugar PTS), a major carbohydrate active transport system, catalyzes the phosphorylation of incoming sugar substrates concomitantly with their translocation across the cell membrane. This system is involved in N-acetylmuramic acid (MurNAc) transport, yielding cytoplasmic MurNAc-6-P. Is also able to take up anhydro-N-acetylmuramic acid (anhMurNAc), but cannot phosphorylate the carbon 6, probably because of the 1,6-anhydro ring. The sequence is that of PTS system N-acetylmuramic acid-specific EIIBC component (murP) from Aliivibrio fischeri (strain ATCC 700601 / ES114) (Vibrio fischeri).